The primary structure comprises 472 residues: Membrane-bound lytic murein transglycosylase F (472 aa).

Positions Met-1–Ala-24 are cleaved as a signal peptide. A non-LT domain region spans residues Asp-25–Ala-259. The tract at residues Asp-260–Glu-472 is LT domain. Glu-306 is a catalytic residue.

In the N-terminal section; belongs to the bacterial solute-binding protein 3 family. This sequence in the C-terminal section; belongs to the transglycosylase Slt family.

It is found in the cell outer membrane. It carries out the reaction Exolytic cleavage of the (1-&gt;4)-beta-glycosidic linkage between N-acetylmuramic acid (MurNAc) and N-acetylglucosamine (GlcNAc) residues in peptidoglycan, from either the reducing or the non-reducing ends of the peptidoglycan chains, with concomitant formation of a 1,6-anhydrobond in the MurNAc residue.. Its function is as follows. Murein-degrading enzyme that degrades murein glycan strands and insoluble, high-molecular weight murein sacculi, with the concomitant formation of a 1,6-anhydromuramoyl product. Lytic transglycosylases (LTs) play an integral role in the metabolism of the peptidoglycan (PG) sacculus. Their lytic action creates space within the PG sacculus to allow for its expansion as well as for the insertion of various structures such as secretion systems and flagella. The protein is Membrane-bound lytic murein transglycosylase F of Methylobacillus flagellatus (strain ATCC 51484 / DSM 6875 / VKM B-1610 / KT).